A 190-amino-acid polypeptide reads, in one-letter code: Small ribosomal subunit protein uS5 (190 aa).

The region spanning 19 to 82 (IIDKLVTINR…ERAKRSMIRV (64 aa)) is the S5 DRBM domain. The segment at 161-190 (SVASRRGKKVSDILGRREPVAGQEGEEAHA) is disordered. The span at 169 to 179 (KVSDILGRREP) shows a compositional bias: basic and acidic residues.

The protein belongs to the universal ribosomal protein uS5 family. In terms of assembly, part of the 30S ribosomal subunit. Contacts proteins S4 and S8.

With S4 and S12 plays an important role in translational accuracy. Functionally, located at the back of the 30S subunit body where it stabilizes the conformation of the head with respect to the body. This is Small ribosomal subunit protein uS5 from Granulibacter bethesdensis (strain ATCC BAA-1260 / CGDNIH1).